The primary structure comprises 219 residues: Thiamine-phosphate synthase (219 aa).

Residues 48–52 and Asn84 each bind 4-amino-2-methyl-5-(diphosphooxymethyl)pyrimidine; that span reads QFRQK. Residues Asp85 and Asp104 each contribute to the Mg(2+) site. Ser123 is a binding site for 4-amino-2-methyl-5-(diphosphooxymethyl)pyrimidine. 150–152 lines the 2-[(2R,5Z)-2-carboxy-4-methylthiazol-5(2H)-ylidene]ethyl phosphate pocket; that stretch reads TQS. Lys153 is a 4-amino-2-methyl-5-(diphosphooxymethyl)pyrimidine binding site. Residues Gly181 and 199–200 contribute to the 2-[(2R,5Z)-2-carboxy-4-methylthiazol-5(2H)-ylidene]ethyl phosphate site; that span reads IS.

This sequence belongs to the thiamine-phosphate synthase family. Mg(2+) serves as cofactor.

It catalyses the reaction 2-[(2R,5Z)-2-carboxy-4-methylthiazol-5(2H)-ylidene]ethyl phosphate + 4-amino-2-methyl-5-(diphosphooxymethyl)pyrimidine + 2 H(+) = thiamine phosphate + CO2 + diphosphate. It carries out the reaction 2-(2-carboxy-4-methylthiazol-5-yl)ethyl phosphate + 4-amino-2-methyl-5-(diphosphooxymethyl)pyrimidine + 2 H(+) = thiamine phosphate + CO2 + diphosphate. The enzyme catalyses 4-methyl-5-(2-phosphooxyethyl)-thiazole + 4-amino-2-methyl-5-(diphosphooxymethyl)pyrimidine + H(+) = thiamine phosphate + diphosphate. Its pathway is cofactor biosynthesis; thiamine diphosphate biosynthesis; thiamine phosphate from 4-amino-2-methyl-5-diphosphomethylpyrimidine and 4-methyl-5-(2-phosphoethyl)-thiazole: step 1/1. Condenses 4-methyl-5-(beta-hydroxyethyl)thiazole monophosphate (THZ-P) and 2-methyl-4-amino-5-hydroxymethyl pyrimidine pyrophosphate (HMP-PP) to form thiamine monophosphate (TMP). The protein is Thiamine-phosphate synthase of Helicobacter pylori (strain Shi470).